Reading from the N-terminus, the 321-residue chain is Glucokinase (321 aa).

8–13 (GDVGGT) lines the ATP pocket.

Belongs to the bacterial glucokinase family.

It localises to the cytoplasm. It catalyses the reaction D-glucose + ATP = D-glucose 6-phosphate + ADP + H(+). This Pectobacterium atrosepticum (strain SCRI 1043 / ATCC BAA-672) (Erwinia carotovora subsp. atroseptica) protein is Glucokinase.